The sequence spans 245 residues: 1-(5-phosphoribosyl)-5-[(5-phosphoribosylamino)methylideneamino] imidazole-4-carboxamide isomerase (245 aa).

Asp8 serves as the catalytic Proton acceptor. The active-site Proton donor is Asp130.

It belongs to the HisA/HisF family.

It localises to the cytoplasm. The catalysed reaction is 1-(5-phospho-beta-D-ribosyl)-5-[(5-phospho-beta-D-ribosylamino)methylideneamino]imidazole-4-carboxamide = 5-[(5-phospho-1-deoxy-D-ribulos-1-ylimino)methylamino]-1-(5-phospho-beta-D-ribosyl)imidazole-4-carboxamide. The protein operates within amino-acid biosynthesis; L-histidine biosynthesis; L-histidine from 5-phospho-alpha-D-ribose 1-diphosphate: step 4/9. The polypeptide is 1-(5-phosphoribosyl)-5-[(5-phosphoribosylamino)methylideneamino] imidazole-4-carboxamide isomerase (Pseudomonas putida (strain ATCC 700007 / DSM 6899 / JCM 31910 / BCRC 17059 / LMG 24140 / F1)).